Here is a 339-residue protein sequence, read N- to C-terminus: Phosphoribosylformylglycinamidine cyclo-ligase (339 aa).

This sequence belongs to the AIR synthase family.

It localises to the cytoplasm. It carries out the reaction 2-formamido-N(1)-(5-O-phospho-beta-D-ribosyl)acetamidine + ATP = 5-amino-1-(5-phospho-beta-D-ribosyl)imidazole + ADP + phosphate + H(+). The protein operates within purine metabolism; IMP biosynthesis via de novo pathway; 5-amino-1-(5-phospho-D-ribosyl)imidazole from N(2)-formyl-N(1)-(5-phospho-D-ribosyl)glycinamide: step 2/2. In Streptococcus thermophilus (strain ATCC BAA-250 / LMG 18311), this protein is Phosphoribosylformylglycinamidine cyclo-ligase.